We begin with the raw amino-acid sequence, 898 residues long: Putative disease resistance protein At1g63350 (898 aa).

The stretch at 24–88 (VSYTHNLEKN…IESRVNDLLN (65 aa)) forms a coiled coil. The NB-ARC domain occupies 137–440 (DQASTSEVEE…CEEIIDGSEG (304 aa)). 179–186 (GMGGVGKT) contacts ATP. LRR repeat units lie at residues 516–537 (VVRR…LDCM), 538–559 (ELTT…FFNS), 562–584 (KLAV…ISEL), 586–608 (SLQY…QELK), 609–631 (KLIH…SCLH), and 632–654 (NLKV…KELE).

This sequence belongs to the disease resistance NB-LRR family.

In terms of biological role, potential disease resistance protein. This is Putative disease resistance protein At1g63350 from Arabidopsis thaliana (Mouse-ear cress).